We begin with the raw amino-acid sequence, 309 residues long: Malate dehydrogenase (309 aa).

NAD(+) contacts are provided by residues 6–11 (GSGRVG) and aspartate 31. The substrate site is built by arginine 80 and arginine 86. NAD(+)-binding positions include asparagine 93 and 116 to 118 (TTN). Asparagine 118 and arginine 149 together coordinate substrate. The active-site Proton acceptor is the histidine 173.

It belongs to the LDH/MDH superfamily. In terms of assembly, homotetramer.

The enzyme catalyses (S)-malate + NAD(+) = oxaloacetate + NADH + H(+). In terms of biological role, catalyzes the reversible oxidation of malate to oxaloacetate. Exhibits higher specific activity for oxaloacetate reduction than for malate oxidation in vitro. Has a strong preference for NAD. Can use NADPH for oxaloacetate reduction, but activity decreases more than 90%. No activity detected with NADP(+) and malate. This is Malate dehydrogenase from Pyrobaculum islandicum (strain DSM 4184 / JCM 9189 / GEO3).